Reading from the N-terminus, the 356-residue chain is S-adenosylmethionine:tRNA ribosyltransferase-isomerase (356 aa).

Belongs to the QueA family. In terms of assembly, monomer.

Its subcellular location is the cytoplasm. The enzyme catalyses 7-aminomethyl-7-carbaguanosine(34) in tRNA + S-adenosyl-L-methionine = epoxyqueuosine(34) in tRNA + adenine + L-methionine + 2 H(+). It functions in the pathway tRNA modification; tRNA-queuosine biosynthesis. Transfers and isomerizes the ribose moiety from AdoMet to the 7-aminomethyl group of 7-deazaguanine (preQ1-tRNA) to give epoxyqueuosine (oQ-tRNA). In Yersinia pseudotuberculosis serotype IB (strain PB1/+), this protein is S-adenosylmethionine:tRNA ribosyltransferase-isomerase.